The following is a 133-amino-acid chain: MTLKLCVLTPNRIVWDSEVKEIILSTNSGQIGILPNHAPIATAVDIGILRIRLNDQWVTMALMGGFARIGNNEITVLVNDAEKGSDIDSLEAQQTLEIAEANFRKAEGKRQTIEANLALRRARTRVEAINAIS.

This sequence belongs to the ATPase epsilon chain family. As to quaternary structure, F-type ATPases have 2 components, CF(1) - the catalytic core - and CF(0) - the membrane proton channel. CF(1) has five subunits: alpha(3), beta(3), gamma(1), delta(1), epsilon(1). CF(0) has three main subunits: a, b and c.

The protein resides in the plastid. Its subcellular location is the chloroplast thylakoid membrane. Its function is as follows. Produces ATP from ADP in the presence of a proton gradient across the membrane. The protein is ATP synthase epsilon chain, chloroplastic of Ipomoea batatas (Sweet potato).